Consider the following 150-residue polypeptide: Small ribosomal subunit protein bS6 (150 aa).

The segment at 99–150 (GPSAMLQKRDRDDRGERGERGFGGGGFGGGRDREDRPRRGRDREEAATEETF) is disordered. 2 stretches are compositionally biased toward basic and acidic residues: residues 105-118 (QKRD…RGER) and 128-144 (GRDR…REEA).

This sequence belongs to the bacterial ribosomal protein bS6 family.

Its function is as follows. Binds together with bS18 to 16S ribosomal RNA. The chain is Small ribosomal subunit protein bS6 from Azorhizobium caulinodans (strain ATCC 43989 / DSM 5975 / JCM 20966 / LMG 6465 / NBRC 14845 / NCIMB 13405 / ORS 571).